The following is a 569-amino-acid chain: Proline--tRNA ligase (569 aa).

The protein belongs to the class-II aminoacyl-tRNA synthetase family. ProS type 1 subfamily. In terms of assembly, homodimer.

It is found in the cytoplasm. The catalysed reaction is tRNA(Pro) + L-proline + ATP = L-prolyl-tRNA(Pro) + AMP + diphosphate. Functionally, catalyzes the attachment of proline to tRNA(Pro) in a two-step reaction: proline is first activated by ATP to form Pro-AMP and then transferred to the acceptor end of tRNA(Pro). As ProRS can inadvertently accommodate and process non-cognate amino acids such as alanine and cysteine, to avoid such errors it has two additional distinct editing activities against alanine. One activity is designated as 'pretransfer' editing and involves the tRNA(Pro)-independent hydrolysis of activated Ala-AMP. The other activity is designated 'posttransfer' editing and involves deacylation of mischarged Ala-tRNA(Pro). The misacylated Cys-tRNA(Pro) is not edited by ProRS. In Desulforamulus reducens (strain ATCC BAA-1160 / DSM 100696 / MI-1) (Desulfotomaculum reducens), this protein is Proline--tRNA ligase.